The sequence spans 183 residues: UPF0316 protein EF_1609 (183 aa).

3 helical membrane passes run 1 to 21 (MVVD…YITL), 35 to 55 (VIAP…LSMV), and 62 to 82 (PLNL…GIKI).

This sequence belongs to the UPF0316 family.

The protein resides in the cell membrane. The sequence is that of UPF0316 protein EF_1609 from Enterococcus faecalis (strain ATCC 700802 / V583).